A 672-amino-acid polypeptide reads, in one-letter code: Poly-beta-1,6-N-acetyl-D-glucosamine N-deacetylase (672 aa).

Positions 1-20 (MLRNGNKYLLMLVSIIMLTA) are cleaved as a signal peptide. Residue Cys21 is the site of N-palmitoyl cysteine attachment. Cys21 is lipidated: S-diacylglycerol cysteine. Residues 107 to 349 (KAVVLTFDDG…IQRVKDMQIS (243 aa)) form the NodB homology domain.

Belongs to the polysaccharide deacetylase family.

It is found in the cell outer membrane. Its function is as follows. Catalyzes the N-deacetylation of poly-beta-1,6-N-acetyl-D-glucosamine (PGA), a biofilm adhesin polysaccharide. N-deacetylation promotes PGA export through the PgaA porin. This chain is Poly-beta-1,6-N-acetyl-D-glucosamine N-deacetylase (pgaB), found in Escherichia coli (strain K12).